Here is a 215-residue protein sequence, read N- to C-terminus: Fanconi anemia core complex-associated protein 24 (215 aa).

The segment at L160–R215 is ruvA domain 2-like.

As to quaternary structure, belongs to the multisubunit FA complex composed of FANCA, FANCB, FANCC, FANCE, FANCF, FANCG, FANCL/PHF9, FANCM and FAAP24. Interacts with FANCM.

The protein localises to the nucleus. Its function is as follows. Plays a role in DNA repair through recruitment of the FA core complex to damaged DNA. Regulates FANCD2 monoubiquitination upon DNA damage. Induces chromosomal instability as well as hypersensitivity to DNA cross-linking agents, when repressed. Targets FANCM/FAAP24 complex to the DNA, preferentially to single strand DNA. This chain is Fanconi anemia core complex-associated protein 24, found in Homo sapiens (Human).